A 226-amino-acid polypeptide reads, in one-letter code: Probable amino-acid ABC transporter permease protein YckA (226 aa).

Positions Ile27–Gln215 constitute an ABC transmembrane type-1 domain. 5 helical membrane passes run Leu31 to Ala51, Val73 to Phe93, Ser94 to Ile114, Val160 to Leu180, and Met194 to Phe214.

This sequence belongs to the binding-protein-dependent transport system permease family. HisMQ subfamily.

It is found in the cell membrane. In terms of biological role, part of a binding-protein-dependent transport system. Probably responsible for the translocation of the substrate across the membrane. The polypeptide is Probable amino-acid ABC transporter permease protein YckA (yckA) (Bacillus subtilis (strain 168)).